The primary structure comprises 52 residues: Large ribosomal subunit protein bL33 (52 aa).

It belongs to the bacterial ribosomal protein bL33 family.

This Chlamydia pneumoniae (Chlamydophila pneumoniae) protein is Large ribosomal subunit protein bL33 (rpmG).